The sequence spans 575 residues: MKIYYNNVCPNCSGRISNERLIKGLPCENDYPYEEGTIEQVYEYLKENNKLKDWANIYNIEKAKKEFEEFFYKAVNNKPWSAQRAWFIRAYKGYSFSIIAPTGMGKTTFALVNALYWGKKGKKVYIIVPTRTLVKQLYEKINVFAERVGFDNIIVAYYGNNKQKKEAKELIKDGAFSILITSNQFLSRNFDLLKNNYFDIIFADDVDSIMKSSKNIDRILYLLGFSETTIEKAMQLIKLKISGKDLEKIRKMEEQLKELVRKEQRGILIAASATGSMRGLRVKLFRELLGFEVGAAKTTIRNIIDVYTEMRDYKKQTLELIKKLGNGGLVFVPTDYGIEKAEEIAQYLKENNIKAEAFYSGKSIELLDKYANKELDVLVGVAHYYGLIVRGIDLPHVVKYAIFVGIPRFRFSAKEKETKIGRILLLASTLSDYADEEFKKKLNTTYNMIKRVSTGALKMVEEAIEQNKELDGFLEELRKNIIYLRDKSFELINREDIIKKLEENPFIALERGDGINILIPDVKTYIQASGRTSRMYPGGITKGLSIILSDNEKLLRALEFKLKLLGIDLHPGSSS.

The segment at Met-1–Glu-39 adopts an RG N-terminal-type; degenerate zinc-finger fold. Residues Gln-83 and Ala-100 to Thr-107 contribute to the ATP site. Residues Phe-87–Glu-247 enclose the Helicase ATP-binding domain. Positions Asp-204 to Asp-207 match the DEAD box motif. Residues Gln-316–Glu-465 enclose the Helicase C-terminal domain.

This sequence belongs to the DEAD box helicase family. DDVD subfamily. Heterodimer of an RgyA and RgyB subunit.

It localises to the cytoplasm. The catalysed reaction is ATP + H2O = ADP + phosphate + H(+). In terms of biological role, modifies the topological state of DNA by introducing positive supercoils in an ATP-dependent process. Binds to single-stranded DNA, transiently cleaves and then rejoins the end, introducing a positive supercoil in the process. The scissile phosphodiester is attacked by the catalytic tyrosine of the enzyme, resulting in the formation of a DNA-(5'-phosphotyrosyl)-enzyme intermediate. Probably involved in rewinding DNA strands in regions of the chromosome that have opened up to allow replication, transcription, DNA repair or for DNA protection. Reconstituted holoenzyme binds dsDNA a bit better than ssDNA, this subunit preferentially binds dsDNA. In isolation this subunit has DNA-stimulated ATPase activity that is stimulated by topoisomerase-domain containing RgyA. This subunit inhibits the relaxation activity of the topoisomerase subunit while promoting positive supercoiling. The protein is Reverse gyrse subunit B of Nanoarchaeum equitans (strain Kin4-M).